A 459-amino-acid polypeptide reads, in one-letter code: NADP-specific glutamate dehydrogenase (459 aa).

Lysine 114 is an active-site residue.

Belongs to the Glu/Leu/Phe/Val dehydrogenases family. In terms of assembly, homohexamer.

It carries out the reaction L-glutamate + NADP(+) + H2O = 2-oxoglutarate + NH4(+) + NADPH + H(+). This is NADP-specific glutamate dehydrogenase (gdhA) from Emericella nidulans (strain FGSC A4 / ATCC 38163 / CBS 112.46 / NRRL 194 / M139) (Aspergillus nidulans).